We begin with the raw amino-acid sequence, 139 residues long: Acyl carrier protein 5, chloroplastic (139 aa).

The transit peptide at 1–54 (MATSFCSSISMQAPFSATTTRFCLNKQATIFNNEKTNNLSFSLRRLMPARLAVS) directs the protein to the chloroplast. A Carrier domain is found at 59-134 (QETVEKVSEI…QAAELIEELV (76 aa)). The residue at position 94 (serine 94) is an O-(pantetheine 4'-phosphoryl)serine.

Belongs to the acyl carrier protein (ACP) family. Post-translationally, 4'-phosphopantetheine is transferred from CoA to a specific serine of apo-ACP by acpS. This modification is essential for activity because fatty acids are bound in thioester linkage to the sulfhydryl of the prosthetic group.

The protein resides in the plastid. It is found in the chloroplast. In terms of biological role, carrier of the growing fatty acid chain in fatty acid biosynthesis. The polypeptide is Acyl carrier protein 5, chloroplastic (ACP5) (Arabidopsis thaliana (Mouse-ear cress)).